The chain runs to 687 residues: MTTQTLLIELLTEELPPKALNNLGNHFAASVAEGLEKAQLVDGAAEFTAYASPRRLAVQVKNVKAVQADQKIVKKGPAVANAVKDGTPTKALEGFARGAGAKIEDLTIVHDGRQDVYAYEYVQTGRPLGGLLENIINQAVKKLPIPKVMRWGSSTFTFVRPVHGLIVLHGGDVVNVSVLGLQSGNQTLGHRFLSDGEIIIENADSYAAQMRGQGKVVASFAGRKAAIQTALEGQARRLNATVAADEALLDEVTALVEWPVVLEAGFEEHFLAVPQECLILTMQQNQKYFPLLDQNGKLMNRFLLVSNLQTEDPSHIIRGNERVLRARLSDAEFFYKQDQKATLESRLPKLANVVYHNKIGSQAERIERLQSIAAHIAKALGADAAAAERAARLAKADLVTEMVGEFPELQGTMGKYYARLDGETEEIAEAIEQHYQPRFAGDKLPESKIAAAVALADKLETLVGIWGIGLIPTGDKDPYALRRAALGILRMLMQYGLDVNELIQTAFDSFPQGLLNEKTPSETADFMQARLAVLLQNDYPQDIVAAVLAKQPRRLDDLTAKLQAVAVFKQLPEAAALAAANKRVQNLLKKADAELGAVNESLLQQDEEKALYAAAQGLQPKIAAAVAEGNFQTALSELASVKPQVDAFFDGVMVMAEDAAVKQNRLNLLNRLAGQMNAVADIALLGE.

This sequence belongs to the class-II aminoacyl-tRNA synthetase family. In terms of assembly, tetramer of two alpha and two beta subunits.

Its subcellular location is the cytoplasm. It carries out the reaction tRNA(Gly) + glycine + ATP = glycyl-tRNA(Gly) + AMP + diphosphate. The polypeptide is Glycine--tRNA ligase beta subunit (Neisseria gonorrhoeae (strain ATCC 700825 / FA 1090)).